The primary structure comprises 191 residues: Peptidyl-tRNA hydrolase (191 aa).

Residue Tyr-14 coordinates tRNA. His-19 serves as the catalytic Proton acceptor. TRNA is bound by residues Phe-64, Asn-66, and Asn-112.

Belongs to the PTH family. As to quaternary structure, monomer.

It localises to the cytoplasm. It carries out the reaction an N-acyl-L-alpha-aminoacyl-tRNA + H2O = an N-acyl-L-amino acid + a tRNA + H(+). Functionally, hydrolyzes ribosome-free peptidyl-tRNAs (with 1 or more amino acids incorporated), which drop off the ribosome during protein synthesis, or as a result of ribosome stalling. Catalyzes the release of premature peptidyl moieties from peptidyl-tRNA molecules trapped in stalled 50S ribosomal subunits, and thus maintains levels of free tRNAs and 50S ribosomes. This is Peptidyl-tRNA hydrolase from Novosphingobium aromaticivorans (strain ATCC 700278 / DSM 12444 / CCUG 56034 / CIP 105152 / NBRC 16084 / F199).